We begin with the raw amino-acid sequence, 31 residues long: uncharacterized protein (31 aa).

This is an uncharacterized protein from Archaeoglobus fulgidus (strain ATCC 49558 / DSM 4304 / JCM 9628 / NBRC 100126 / VC-16).